A 259-amino-acid chain; its full sequence is MERKIIRREKEREYEGRHNSVEDAEQGKNCKSTLMTLNVGGYLYITQKQTLTKYPDTFLEGIVNGKILCPFDADGHYFIDRDGLLFRHVLNFLRNGELLLPEGFRENQLLAQEAEFFQLKGLAEEVKSRWEKEQLTPRETTFLEITDNHDRSQGLRIFCNAPDFISKIKSRIVLVSKSRLDGFPEEFSVSSNIIQFKYFIKSENGTRLVLKEDNTFVCTLETLKFEAIMMALKCGFRLLTSLDCSKGSIVHSDALHFIK.

Residues 33–134 enclose the BTB domain; sequence TLMTLNVGGY…EVKSRWEKEQ (102 aa).

The chain is BTB/POZ domain-containing protein KCTD4 (Kctd4) from Mus musculus (Mouse).